The following is a 326-amino-acid chain: UDP-3-O-acylglucosamine N-acyltransferase (326 aa).

Residue H235 is the Proton acceptor of the active site.

Belongs to the transferase hexapeptide repeat family. LpxD subfamily. In terms of assembly, homotrimer.

It catalyses the reaction a UDP-3-O-[(3R)-3-hydroxyacyl]-alpha-D-glucosamine + a (3R)-hydroxyacyl-[ACP] = a UDP-2-N,3-O-bis[(3R)-3-hydroxyacyl]-alpha-D-glucosamine + holo-[ACP] + H(+). Its pathway is bacterial outer membrane biogenesis; LPS lipid A biosynthesis. Its function is as follows. Catalyzes the N-acylation of UDP-3-O-acylglucosamine using 3-hydroxyacyl-ACP as the acyl donor. Is involved in the biosynthesis of lipid A, a phosphorylated glycolipid that anchors the lipopolysaccharide to the outer membrane of the cell. This Helicobacter hepaticus (strain ATCC 51449 / 3B1) protein is UDP-3-O-acylglucosamine N-acyltransferase.